We begin with the raw amino-acid sequence, 287 residues long: 1-acyl-sn-glycerol-3-phosphate acyltransferase alpha (287 aa).

The first 26 residues, 1 to 26, serve as a signal peptide directing secretion; that stretch reads MELWPGAGTLLLLLFLLLLLLLPTLW. Over 27-37 the chain is Lumenal; it reads FCSPSAKYFFK. A helical membrane pass occupies residues 38–58; that stretch reads MAFYNGWILFLAVLAIPVCAV. Topologically, residues 59 to 127 are cytoplasmic; the sequence is RGRNVENMKI…PGRCVPIAKR (69 aa). Positions 104 to 109 match the HXXXXD motif motif; sequence HQSSLD. The helical transmembrane segment at 128-148 threads the bilayer; it reads ELLWAGSAGLACWLAGVIFID. The Lumenal portion of the chain corresponds to 149 to 287; it reads RKRTGDAISV…KPGGVGEAGL (139 aa). The short motif at 178–181 is the EGTR motif element; the sequence is EGTR.

This sequence belongs to the 1-acyl-sn-glycerol-3-phosphate acyltransferase family.

The protein resides in the endoplasmic reticulum membrane. The enzyme catalyses a 1-acyl-sn-glycero-3-phosphate + an acyl-CoA = a 1,2-diacyl-sn-glycero-3-phosphate + CoA. It carries out the reaction 1-(9Z-octadecenoyl)-sn-glycero-3-phosphate + (9Z)-octadecenoyl-CoA = 1,2-di-(9Z-octadecenoyl)-sn-glycero-3-phosphate + CoA. It catalyses the reaction 1-(9Z-octadecenoyl)-sn-glycero-3-phosphate + hexadecanoyl-CoA = 1-(9Z)-octadecenoyl-2-hexadecanoyl-sn-glycero-3-phosphate + CoA. The catalysed reaction is heptadecanoyl-CoA + 1-(9Z-octadecenoyl)-sn-glycero-3-phosphate = 1-(9Z)-octadecenoyl-2-heptadecanoyl-sn-glycero-3-phosphate + CoA. The enzyme catalyses 1-(9Z-octadecenoyl)-sn-glycero-3-phosphate + octadecanoyl-CoA = 1-(9Z-octadecenoyl)-2-octadecanoyl-sn-glycero-3-phosphate + CoA. It carries out the reaction 1-(9Z-octadecenoyl)-sn-glycero-3-phosphate + (9Z,12Z)-octadecadienoyl-CoA = 1-(9Z)-octadecenoyl-2-(9Z,12Z)-octadecadienoyl-sn-glycero-3-phosphate + CoA. It catalyses the reaction 1-(9Z-octadecenoyl)-sn-glycero-3-phosphate + tetradecanoyl-CoA = 1-(9Z)-octadecenoyl-2-tetradecanoyl-sn-glycero-3-phosphate + CoA. The catalysed reaction is pentadecanoyl-CoA + 1-(9Z-octadecenoyl)-sn-glycero-3-phosphate = 1-(9Z)-octadecenoyl-2-pentadecanoyl-sn-glycero-3-phosphate + CoA. The enzyme catalyses 1-hexadecanoyl-sn-glycero-3-phosphate + (9Z)-octadecenoyl-CoA = 1-hexadecanoyl-2-(9Z-octadecenoyl)-sn-glycero-3-phosphate + CoA. It carries out the reaction 1-(9Z,12Z,15Z)-octadecatrienoyl-sn-glycero-3-phosphate + (9Z)-octadecenoyl-CoA = 1-(9Z,12Z,15Z)-octadecatrienoyl-2-(9Z)-octadecenoyl-sn-glycero-3-phosphate + CoA. It catalyses the reaction 1-(6Z,9Z,12Z-octadecatrienoyl)-sn-glycero-3-phosphate + (9Z)-octadecenoyl-CoA = (6Z,9Z,12Z)-octadecatrienoyl-2-(9Z)-octadecenoyl-sn-glycero-3-phosphate + CoA. The catalysed reaction is 1-eicosanoyl-sn-glycero-3-phosphate + (9Z)-octadecenoyl-CoA = 1-eicosanoyl-2-(9Z)-octadecenoyl-sn-glycero-3-phosphate + CoA. The enzyme catalyses 1-tetradecanoyl-sn-glycerol 3-phosphate + (9Z)-octadecenoyl-CoA = 1-tetradecanoyl-2-(9Z)-octadecenoyl-sn-glycero-3-phosphate + CoA. It carries out the reaction 1-(9Z-octadecenoyl)-sn-glycero-3-phosphate + (5Z,8Z,11Z,14Z)-eicosatetraenoyl-CoA = 1-(9Z)-octadecenoyl-2-(5Z,8Z,11Z,14Z)-eicosatetraenoyl-sn-glycero-3-phosphate + CoA. It catalyses the reaction 1-(9Z-octadecenoyl)-sn-glycero-3-phosphate + dodecanoyl-CoA = 1-(9Z)-octadecenoyl-2-dodecanoyl-sn-glycero-3-phosphate + CoA. The catalysed reaction is (6Z)-octadecenoyl-CoA + 1-(9Z-octadecenoyl)-sn-glycero-3-phosphate = 1-(9Z)-octadecenoyl-2-(6Z)-octadecenoyl-sn-glycero-3-phosphate + CoA. The enzyme catalyses (11Z)-octadecenoyl-CoA + 1-(9Z-octadecenoyl)-sn-glycero-3-phosphate = 1-(9Z)-octadecenoyl-2-(11Z)-octadecenoyl-sn-glycero-3-phosphate + CoA. It carries out the reaction (9Z)-hexadecenoyl-CoA + 1-(9Z-octadecenoyl)-sn-glycero-3-phosphate = 1-(9Z-octadecenoyl)-2-(9Z-hexadecenoyl)-sn-glycero-3-phosphate + CoA. Its pathway is phospholipid metabolism; CDP-diacylglycerol biosynthesis; CDP-diacylglycerol from sn-glycerol 3-phosphate: step 2/3. Its function is as follows. Converts 1-acyl-sn-glycerol-3-phosphate (lysophosphatidic acid or LPA) into 1,2-diacyl-sn-glycerol-3-phosphate (phosphatidic acid or PA) by incorporating an acyl moiety at the sn-2 position of the glycerol backbone. This is 1-acyl-sn-glycerol-3-phosphate acyltransferase alpha (AGPAT1) from Bos taurus (Bovine).